Consider the following 270-residue polypeptide: Probable septum site-determining protein MinC (270 aa).

A disordered region spans residues 105–129; it reads DRRAPSSKAADEAPVQQAEPAAPAA. Low complexity predominate over residues 116 to 129; sequence EAPVQQAEPAAPAA.

Belongs to the MinC family. As to quaternary structure, interacts with MinD and FtsZ.

In terms of biological role, cell division inhibitor that blocks the formation of polar Z ring septums. Rapidly oscillates between the poles of the cell to destabilize FtsZ filaments that have formed before they mature into polar Z rings. Prevents FtsZ polymerization. This chain is Probable septum site-determining protein MinC, found in Burkholderia pseudomallei (strain 1106a).